We begin with the raw amino-acid sequence, 122 residues long: Large ribosomal subunit protein uL14 (122 aa).

It belongs to the universal ribosomal protein uL14 family. Part of the 50S ribosomal subunit. Forms a cluster with proteins L3 and L19. In the 70S ribosome, L14 and L19 interact and together make contacts with the 16S rRNA in bridges B5 and B8.

Binds to 23S rRNA. Forms part of two intersubunit bridges in the 70S ribosome. This is Large ribosomal subunit protein uL14 from Chelativorans sp. (strain BNC1).